The sequence spans 74 residues: Kappa-stichotoxin-Shd5a (74 aa).

The signal sequence occupies residues Met1–Ala22. The propeptide occupies Arg23–Arg39. Positions Cys42 to Cys74 constitute a ShKT domain. 3 disulfides stabilise this stretch: Cys42/Cys74, Cys51/Cys67, and Cys56/Cys71.

This sequence belongs to the sea anemone type 1 potassium channel toxin family. Type 1a subfamily.

The protein localises to the secreted. It localises to the nematocyst. Its function is as follows. Inhibits voltage-gated potassium channels (Kv) with higher potency for Kv1.1/KCNA1 and Kv1.3/KCNA3. The polypeptide is Kappa-stichotoxin-Shd5a (Stichodactyla haddoni (Saddle carpet anemone)).